A 495-amino-acid polypeptide reads, in one-letter code: MKLDKNKIQISIGKNPSKTFYKLQLLLKDHFPENLKTKFSFQTASGIFTGENGQIFTDEVEKIIYLGLGETSKIKIRGVAQHFFQFGEKLKKWEGVGLEIHLPKVLTNSLSADLVVYQIVNSLEQGAYAINVLAKEYKENSKKIGNVSFILQDAAKLKEAEKGLKRGKIVSRYINGVRHIAHLPANHFTPEEFVSRSKEIAKDNGLKITVFDEPQLKKEKMGGILSVCEGSDKKAKMILLEYTPVKPITKKKLAIIGKGLTFDSGGISIKPAQDMHEMKYDMCGAATAIHAIGAIAELGLGVPVIAAIGVAENMPDAAAIKPGDVYTAYNGITVEVQNTDAEGRLVLGDVLSYVGKKFKPDYMLDLATLTGAIIISLGHEAAGVMSNSDVLTNLLKEASISSDERIWEMPLWEEYSEDLKSDIADIRNVAGRAGGSLSAAKFLERFVEPGIAWAHIDIAGTAWRKKTSGTQIGNGPTGYGVRLLVDLVEKIGKKK.

Positions 258 and 263 each coordinate Mn(2+). K270 is a catalytic residue. Mn(2+) is bound by residues D281, D340, and E342. R344 is a catalytic residue.

The protein belongs to the peptidase M17 family. It depends on Mn(2+) as a cofactor.

Its subcellular location is the cytoplasm. It carries out the reaction Release of an N-terminal amino acid, Xaa-|-Yaa-, in which Xaa is preferably Leu, but may be other amino acids including Pro although not Arg or Lys, and Yaa may be Pro. Amino acid amides and methyl esters are also readily hydrolyzed, but rates on arylamides are exceedingly low.. The enzyme catalyses Release of an N-terminal amino acid, preferentially leucine, but not glutamic or aspartic acids.. Presumably involved in the processing and regular turnover of intracellular proteins. Catalyzes the removal of unsubstituted N-terminal amino acids from various peptides. The protein is Probable cytosol aminopeptidase of Leptospira interrogans serogroup Icterohaemorrhagiae serovar copenhageni (strain Fiocruz L1-130).